The chain runs to 427 residues: Serine--tRNA ligase (427 aa).

An L-serine-binding site is contributed by 231 to 233 (TAE). Residues 262–264 (RRE) and valine 278 each bind ATP. Position 285 (glutamate 285) interacts with L-serine. 349 to 352 (EVSS) is an ATP binding site. Serine 384 is an L-serine binding site.

Belongs to the class-II aminoacyl-tRNA synthetase family. Type-1 seryl-tRNA synthetase subfamily. Homodimer. The tRNA molecule binds across the dimer.

The protein localises to the cytoplasm. The enzyme catalyses tRNA(Ser) + L-serine + ATP = L-seryl-tRNA(Ser) + AMP + diphosphate + H(+). It catalyses the reaction tRNA(Sec) + L-serine + ATP = L-seryl-tRNA(Sec) + AMP + diphosphate + H(+). It participates in aminoacyl-tRNA biosynthesis; selenocysteinyl-tRNA(Sec) biosynthesis; L-seryl-tRNA(Sec) from L-serine and tRNA(Sec): step 1/1. In terms of biological role, catalyzes the attachment of serine to tRNA(Ser). Is also able to aminoacylate tRNA(Sec) with serine, to form the misacylated tRNA L-seryl-tRNA(Sec), which will be further converted into selenocysteinyl-tRNA(Sec). This is Serine--tRNA ligase from Chlamydia pneumoniae (Chlamydophila pneumoniae).